The sequence spans 339 residues: tRNA N6-adenosine threonylcarbamoyltransferase (339 aa).

Residues histidine 111 and histidine 115 each contribute to the Fe cation site. Residues 134–138 (LVSGG), aspartate 167, glycine 180, and asparagine 272 contribute to the substrate site. A Fe cation-binding site is contributed by aspartate 300.

The protein belongs to the KAE1 / TsaD family. The cofactor is Fe(2+).

It is found in the cytoplasm. It catalyses the reaction L-threonylcarbamoyladenylate + adenosine(37) in tRNA = N(6)-L-threonylcarbamoyladenosine(37) in tRNA + AMP + H(+). Functionally, required for the formation of a threonylcarbamoyl group on adenosine at position 37 (t(6)A37) in tRNAs that read codons beginning with adenine. Is involved in the transfer of the threonylcarbamoyl moiety of threonylcarbamoyl-AMP (TC-AMP) to the N6 group of A37, together with TsaE and TsaB. TsaD likely plays a direct catalytic role in this reaction. In Sodalis glossinidius (strain morsitans), this protein is tRNA N6-adenosine threonylcarbamoyltransferase.